The sequence spans 906 residues: Catenin alpha-1 (906 aa).

At Thr2 the chain carries N-acetylthreonine. Residues 2 to 228 (TAVHTGNINF…PILYTASQAC (227 aa)) form an involved in homodimerization region. Residue Lys57 forms a Glycyl lysine isopeptide (Lys-Gly) (interchain with G-Cter in SUMO2) linkage. Positions 97–148 (VRKQCDLMKSAAGEFADDPCSSVKRGNMVRAARALLSAVTRLLILADMADVY) are interaction with JUP and CTNNB1. Phosphoserine is present on residues Ser264, Ser268, Ser295, and Ser297. The interaction with alpha-actinin stretch occupies residues 325-394 (TRDDRRERIV…AVMDHVSDSF (70 aa)). The residue at position 634 (Thr634) is a Phosphothreonine. Ser641 is modified (phosphoserine). A Phosphothreonine modification is found at Thr645. Phosphoserine occurs at positions 652 and 655. Thr658 is subject to Phosphothreonine. Lys797 is covalently cross-linked (Glycyl lysine isopeptide (Lys-Gly) (interchain with G-Cter in SUMO2)). Position 851 is a phosphoserine (Ser851). Basic and acidic residues predominate over residues 864-880 (PEKKPLVKREKQDETQT). Residues 864–894 (PEKKPLVKREKQDETQTKIKRASQKKHVNPV) form a disordered region. Positions 881–891 (KIKRASQKKHV) are enriched in basic residues.

Belongs to the vinculin/alpha-catenin family. As to quaternary structure, monomer and homodimer; the monomer preferentially binds to CTNNB1 and the homodimer to actin. Component of an cadherin:catenin adhesion complex composed of at least of CDH26, beta-catenin/CTNNB1, alpha-catenin/CTNNA1 and p120 catenin/CTNND1. Possible component of an E-cadherin/ catenin adhesion complex together with E-cadherin/CDH1 and beta-catenin/CTNNB1 or gamma-catenin/JUP; the complex is located to adherens junctions. The stable association of CTNNA1 is controversial as CTNNA1 was shown not to bind to F-actin when assembled in the complex. Alternatively, the CTNNA1-containing complex may be linked to F-actin by other proteins such as LIMA1. Binds AFDN and F-actin. Interacts with ARHGAP21. Interacts with AJUBA. Interacts with LIMA1. Interacts with vinculin/VCL. Interacts with TJP2/ZO2 (via N-terminus). Interacts with TJP1/ZO1 (via N-terminus). Sumoylated. In terms of processing, phosphorylation seems to contribute to the strength of cell-cell adhesion rather than to the basic capacity for cell-cell adhesion.

The protein localises to the cytoplasm. It localises to the cytoskeleton. The protein resides in the cell junction. Its subcellular location is the adherens junction. It is found in the cell membrane. The protein localises to the nucleus. Its function is as follows. Associates with the cytoplasmic domain of a variety of cadherins. The association of catenins to cadherins produces a complex which is linked to the actin filament network, and which seems to be of primary importance for cadherins cell-adhesion properties. Can associate with both E- and N-cadherins. Originally believed to be a stable component of E-cadherin/catenin adhesion complexes and to mediate the linkage of cadherins to the actin cytoskeleton at adherens junctions. In contrast, cortical actin was found to be much more dynamic than E-cadherin/catenin complexes and CTNNA1 was shown not to bind to F-actin when assembled in the complex suggesting a different linkage between actin and adherens junctions components. The homodimeric form may regulate actin filament assembly and inhibit actin branching by competing with the Arp2/3 complex for binding to actin filaments. Involved in the regulation of WWTR1/TAZ, YAP1 and TGFB1-dependent SMAD2 and SMAD3 nuclear accumulation. May play a crucial role in cell differentiation. This is Catenin alpha-1 from Bos taurus (Bovine).